We begin with the raw amino-acid sequence, 1135 residues long: Envelopment polyprotein (1135 aa).

Positions 1 to 35 are cleaved as a signal peptide; the sequence is MRILKLLELVVKVSLFTIALSSVLLAFLIFRATDA. The Lumenal segment spans residues 36–314; that stretch reads KVEIIRGDHP…KYSKSIYKQT (279 aa). Positions 41 to 43 match the Cell attachment site motif; that stretch reads RGD. 2 cysteine pairs are disulfide-bonded: Cys114/Cys145 and Cys122/Cys156. Asn116 is a glycosylation site (N-linked (GlcNAc...) asparagine; by host). The non-covalent dimerization stretch occupies residues 177–195; the sequence is LDNKRHFSVGTKFFISESL. N-linked (GlcNAc...) asparagine; by host glycosylation occurs at Asn210. Cys224 and Cys285 are disulfide-bonded. A helical membrane pass occupies residues 315-366; the sequence is ACINFSWIRLILIALLIYFPIRWLVNKTTKPLFLWYDLIGLITYPILLLINC. Residues 367–484 are Cytoplasmic-facing; that stretch reads LWKYFPFKCS…VPGCPFLVTS (118 aa). Positions 437 to 484 are signal for signal peptide peptidase; sequence LSFSLLKFVTEILIGLIILSQMPMSMAQTTQCLSGCFYVPGCPFLVTS. The Lumenal segment spans residues 485 to 1067; sequence KFEKCPERDQ…YFGSFFDTIR (583 aa). N-linked (GlcNAc...) asparagine; by host glycans are attached at residues Asn588, Asn605, and Asn980. A helical transmembrane segment spans residues 1068–1088; sequence VILLIAFIFLVIYFCSILTTI. The Cytoplasmic portion of the chain corresponds to 1089–1135; that stretch reads CKGYVKNESYKSRSKIEDDDDSEIKAPMLMKDTMTRRRPPMDFSHLV.

The protein belongs to the tospovirus envelope glycoprotein family. In terms of assembly, homodimer; disulfide-linked. Heterodimer with Glycoprotein C. Interacts with nucleoprotein. As to quaternary structure, heterodimer with Glycoprotein N. Interacts with nucleoprotein. In terms of processing, specific enzymatic cleavages in vivo yield mature proteins including Glycoprotein N and Glycoprotein C. Glycosylated with O-linked glycans. Glycosylation is essential for proper subcellular location. Post-translationally, cleaved at acidic pH.

It is found in the virion membrane. The protein localises to the host Golgi apparatus membrane. It localises to the host endoplasmic reticulum membrane. In terms of biological role, forms the spikes present at the surface of the virion together with Glycoprotein C. They are able to attach the virion to a cell receptor and to promote fusion of membranes after endocytosis of the virion. Plays a role in virus binding and/or entry into the vector midgut. Forms the spikes present at the surface of the virion together with Glycoprotein N. They are able to attach the virion to a cell receptor and to promote fusion of membranes after endocytosis of the virion. Probable class II fusion protein. This chain is Envelopment polyprotein (GP), found in Tomato spotted wilt virus (strain Regular2A) (TSWV).